We begin with the raw amino-acid sequence, 546 residues long: Parathyroid hormone 2 receptor (546 aa).

The signal sequence occupies residues Met1 to Ala24. At Asp27 to Tyr143 the chain is on the extracellular side. N-linked (GlcNAc...) asparagine glycans are attached at residues Asn51, Asn106, Asn116, and Asn121. The helical transmembrane segment at Ile144–Phe167 threads the bilayer. Residues Arg168–Arg174 are Cytoplasmic-facing. A helical transmembrane segment spans residues Asn175–Val194. Residues Lys195–Lys235 lie on the Extracellular side of the membrane. The chain crosses the membrane as a helical span at residues Ile236 to Tyr258. At Leu259–Tyr273 the chain is on the cytoplasmic side. The chain crosses the membrane as a helical span at residues Leu274 to Ala295. The Extracellular segment spans residues Arg296–Trp313. A helical transmembrane segment spans residues Ile314–Val334. At Arg335–Ser361 the chain is on the cytoplasmic side. The chain crosses the membrane as a helical span at residues Thr362–Pro380. The Extracellular segment spans residues His381–Arg391. The helical transmembrane segment at Met392–Asn414 threads the bilayer. The Cytoplasmic portion of the chain corresponds to Gly415–Ile546. Positions Ser497–Ile546 are disordered. Basic and acidic residues-rich tracts occupy residues Pro506–Asp519 and Glu537–Ile546.

Belongs to the G-protein coupled receptor 2 family. As to quaternary structure, binds to TIPF39/TIP39.

It localises to the cell membrane. Its function is as follows. This is a specific receptor for parathyroid hormone. The activity of this receptor is mediated by G proteins which activate adenylyl cyclase. PTH2R may be responsible for PTH effects in a number of physiological systems. It may play a significant role in pancreatic function. PTH2R presence in neurons indicates that it may function as a neurotransmitter receptor. In Mus musculus (Mouse), this protein is Parathyroid hormone 2 receptor (Pth2r).